Here is an 88-residue protein sequence, read N- to C-terminus: Stannin (88 aa).

At 1 to 10 (MSIMDHSPTT) the chain is on the mitochondrial intermembrane side. Residues 11–31 (GVVTVIVILIAIAALGALILG) form a helical membrane-spanning segment. At 32 to 88 (CWCYLRLQRISQSEDEESIVGDGETKEPFLLVQYSAKGPCVERKAKLMTPNGPEVHG) the chain is on the cytoplasmic side. The residue at position 49 (serine 49) is a Phosphoserine.

This sequence belongs to the stannin family. As to quaternary structure, monomer.

Its subcellular location is the mitochondrion outer membrane. Plays a role in the toxic effects of organotins. Plays a role in endosomal maturation. In Homo sapiens (Human), this protein is Stannin (SNN).